An 82-amino-acid polypeptide reads, in one-letter code: Metallothionein (82 aa).

Residues C6, C8, C11, C13, C29, C33, H37, C43, C48, and C50 each coordinate Cd(2+). C6, C8, and C11 together coordinate Zn(2+). 6 residues coordinate Zn(2+): C29, C33, H37, C43, C48, and C50. The disordered stretch occupies residues 61 to 82 (ITNNQLDEALEETFPASDPISP).

This sequence belongs to the metallothionein superfamily.

Its function is as follows. Metallothioneins are small proteins that have a high content of cysteine residues which allow them to bind heavy metal ions through clusters of thiolate bonds. Preferentially, binds four Cd(2+) ions. Also binds three Zn(2+) ions but with less affinity. Required for long-term viability. May play a role in the storage or sequestration of metals when present in excess. This Pseudomonas fluorescens (strain Q2-87) protein is Metallothionein.